The sequence spans 570 residues: Hydroxylamine reductase (570 aa).

[4Fe-4S] cluster contacts are provided by C5, C8, C17, and C23. 8 residues coordinate hybrid [4Fe-2O-2S] cluster: H266, E290, C334, C425, C453, C478, E513, and K515. C425 bears the Cysteine persulfide mark.

Belongs to the HCP family. [4Fe-4S] cluster is required as a cofactor. The cofactor is hybrid [4Fe-2O-2S] cluster.

It localises to the cytoplasm. The catalysed reaction is A + NH4(+) + H2O = hydroxylamine + AH2 + H(+). Functionally, catalyzes the reduction of hydroxylamine to form NH(3) and H(2)O. This chain is Hydroxylamine reductase, found in Clostridium tetani (strain Massachusetts / E88).